Consider the following 870-residue polypeptide: Ribonucleoside-diphosphate reductase large subunit (870 aa).

Residues 16-110 (MYVVKRDGTK…VSNLHKQTSK (95 aa)) form the ATP-cone domain. Residues 20 to 21 (KR), 26 to 32 (ENVSFDK), Thr71, and Asp75 each bind ATP. Ser235 serves as a coordination point for GDP. A disulfide bond links Cys236 and Cys463. Residues 244 to 246 (DSI), Lys261, Arg274, and 281 to 282 (RG) contribute to the dTTP site. Residue Asn446 participates in GDP binding. The Proton acceptor role is filled by Asn446. Cys448 functions as the Cysteine radical intermediate in the catalytic mechanism. Residues Glu450 and 632–635 (TAST) contribute to the GDP site. The Proton acceptor role is filled by Glu450. The segment at 789-854 (KPVENNINST…NNNEDDLANY (66 aa)) is disordered. Residues 796-811 (NSTTPLKTPTKTPNSS) show a composition bias toward low complexity. Positions 812-831 (NRISTSPTNNLTSPIRFNIT) are enriched in polar residues. Residues 832–844 (QQQQQQQQQQQQQ) are compositionally biased toward low complexity.

It belongs to the ribonucleoside diphosphate reductase large chain family. As to quaternary structure, heterodimer of a large and a small subunit.

The protein localises to the cytoplasm. The enzyme catalyses a 2'-deoxyribonucleoside 5'-diphosphate + [thioredoxin]-disulfide + H2O = a ribonucleoside 5'-diphosphate + [thioredoxin]-dithiol. Under complex allosteric control mediated by deoxynucleoside triphosphates and ATP binding to separate specificity and activation sites on the large subunit. The type of nucleotide bound at the specificity site determines substrate preference. It seems probable that ATP makes the enzyme reduce CDP and UDP, dGTP favors ADP reduction and dTTP favors GDP reduction. Stimulated by ATP and inhibited by dATP binding to the activity site. Its function is as follows. Provides the precursors necessary for DNA synthesis. Catalyzes the biosynthesis of deoxyribonucleotides from the corresponding ribonucleotides. This is Ribonucleoside-diphosphate reductase large subunit (rnrA) from Dictyostelium discoideum (Social amoeba).